A 290-amino-acid chain; its full sequence is Aquaporin-3 (290 aa).

Topologically, residues 1–24 (MGRQKELVTRCGEMLHIRYRLLRQ) are cytoplasmic. The helical transmembrane segment at 25–42 (ALAECLGTLILVMFGCGS) threads the bilayer. The Extracellular portion of the chain corresponds to 43-56 (VAQVVLSRGTHGGF). Residues 57–74 (LTINLAFGFAVTLGILVA) form a helical membrane-spanning segment. The Cytoplasmic segment spans residues 75-78 (GQVS). The discontinuously helical intramembrane region spans 79–92 (GAHLNPAVTFAMCF). An NPA 1 motif is present at residues 83-85 (NPA). At 93 to 100 (LAREPWIK) the chain is on the cytoplasmic side. The helical transmembrane segment at 101–121 (LPVYTLAQTLGAFLGAGIIFG) threads the bilayer. Over 122 to 159 (LYYDAIWAFANNQLIVSGPNGTAGIFATYPSGHLDMVN) the chain is Extracellular. Asn141 is a glycosylation site (N-linked (GlcNAc...) asparagine). Residues 160-177 (GFFDQFIGTASLIVCVLA) form a helical membrane-spanning segment. The Cytoplasmic segment spans residues 178-189 (IVDPNNNPVPRG). The helical transmembrane segment at 190–206 (LEAFTVGLVVLVIGTSM) threads the bilayer. The Extracellular segment spans residues 207–210 (GFNS). The discontinuously helical intramembrane region spans 211-224 (GYAVNPARDFGPRL). An NPA 2 motif is present at residues 215 to 217 (NPA). Residues 225 to 242 (FTAIAGWGSEVFTTGRHW) are Extracellular-facing. A helical transmembrane segment spans residues 243–264 (WWVPIASPLLGSIAGVFVYQLM). Topologically, residues 265-290 (IGCHLEPPPPSTDEENVKLSQVKHKE) are cytoplasmic.

Belongs to the MIP/aquaporin (TC 1.A.8) family. In terms of assembly, homotetramer; each monomer provides an independent glycerol/water pore. Could also exist in other oligomeric states. In terms of tissue distribution, highly expressed in stomach and spleen, with lower expression in kidney and lung.

Its subcellular location is the cell membrane. The protein resides in the basolateral cell membrane. It catalyses the reaction glycerol(in) = glycerol(out). It carries out the reaction H2O(in) = H2O(out). The enzyme catalyses urea(in) = urea(out). The catalysed reaction is H2O2(out) = H2O2(in). Aquaglyceroporins form homotetrameric transmembrane channels, with each monomer independently mediating glycerol and water transport across the plasma membrane along their osmotic gradient. Could also be permeable to urea. Also participates in cell permeability to H2O2 and H2O2-mediated signaling. In skin, transports glycerol to the epidermis and stratum corneum, where it maintains hydration, elasticity, and supports lipid biosynthesis for barrier repair. In kidney, contributes to the reabsorption of water, helping the body maintain proper fluid balance. This is Aquaporin-3 from Sus scrofa (Pig).